The chain runs to 181 residues: MSADENNLIWIDLEMTGLDPERDRIIEIATLVTDASLNILAEGPTIAVHQSDAQLALMDDWNVRTHTGSGLVDRVKASTMGERDAELATIEFLKTWVPAGKSPICGNSIGQDRRFLFKYMPELEAYFHYRYLDVSTLKELARRWKPEILAGFTKQGTHQAMDDIRESVAELAYYREHFIKL.

One can recognise an Exonuclease domain in the interval 8-171 (LIWIDLEMTG…DDIRESVAEL (164 aa)). Tyrosine 129 is an active-site residue.

This sequence belongs to the oligoribonuclease family.

Its subcellular location is the cytoplasm. In terms of biological role, 3'-to-5' exoribonuclease specific for small oligoribonucleotides. The chain is Oligoribonuclease from Salmonella choleraesuis (strain SC-B67).